A 144-amino-acid polypeptide reads, in one-letter code: Large ribosomal subunit protein uL11 (144 aa).

It belongs to the universal ribosomal protein uL11 family. As to quaternary structure, part of the ribosomal stalk of the 50S ribosomal subunit. Interacts with L10 and the large rRNA to form the base of the stalk. L10 forms an elongated spine to which L12 dimers bind in a sequential fashion forming a multimeric L10(L12)X complex. One or more lysine residues are methylated.

Its function is as follows. Forms part of the ribosomal stalk which helps the ribosome interact with GTP-bound translation factors. This is Large ribosomal subunit protein uL11 from Rhodococcus opacus (strain B4).